A 160-amino-acid polypeptide reads, in one-letter code: Cyclic pyranopterin monophosphate synthase (160 aa).

Residues 77 to 79 (MCH) and 114 to 115 (ME) each bind substrate. D129 is a catalytic residue.

It belongs to the MoaC family. Homohexamer; trimer of dimers.

The catalysed reaction is (8S)-3',8-cyclo-7,8-dihydroguanosine 5'-triphosphate = cyclic pyranopterin phosphate + diphosphate. It participates in cofactor biosynthesis; molybdopterin biosynthesis. Catalyzes the conversion of (8S)-3',8-cyclo-7,8-dihydroguanosine 5'-triphosphate to cyclic pyranopterin monophosphate (cPMP). The polypeptide is Cyclic pyranopterin monophosphate synthase (Listeria monocytogenes serotype 4a (strain HCC23)).